A 544-amino-acid polypeptide reads, in one-letter code: Probable protein kinase UbiB (544 aa).

In terms of domain architecture, Protein kinase spans 123 to 501 (DFDLVPLASA…KRQQATGKFL (379 aa)). ATP contacts are provided by residues 129–137 (LASASIAQV) and lysine 152. Catalysis depends on aspartate 287, which acts as the Proton acceptor. 2 helical membrane passes run 496–516 (ATGK…AILV) and 519–539 (TYEQ…LFSW).

This sequence belongs to the ABC1 family. UbiB subfamily.

It localises to the cell inner membrane. It functions in the pathway cofactor biosynthesis; ubiquinone biosynthesis [regulation]. Its function is as follows. Is probably a protein kinase regulator of UbiI activity which is involved in aerobic coenzyme Q (ubiquinone) biosynthesis. The polypeptide is Probable protein kinase UbiB (Vibrio vulnificus (strain CMCP6)).